The primary structure comprises 178 residues: Protein modigliani (178 aa).

In terms of assembly, probably homodimerizes. Component of the MTV complex, composed of moi/modigliani, tea and ver/verrocchio. Interacts with ver/verrochio and tea (via C-terminus); the interactions are direct and require fully intact moi/modigliani and ver/verrocchio. The MTV complex is recruited to telomeres by the HipHop-HOAP complex, consisting of HipHop, cav/HOAP and Su(var)205/HP1 to form the terminin telomere-capping complex. Interacts with cav/HOAP and Su(var)205/HP1; the interactions are direct. Probably interacts with peo (via N-terminus and UBC domain).

It localises to the nucleus. The protein localises to the chromosome. Its subcellular location is the telomere. Part of the MTV complex that associates with the HipHop-HOAP complex to form the terminin telomere-capping complex involved in telomere maintenance and prevention of telomere fusion. Potentially functions downstream of mei-41/ATR. As part of the MTV complex binds single stranded DNA in a sequence-independent manner, protecting it from degradation. This chain is Protein modigliani, found in Drosophila melanogaster (Fruit fly).